Consider the following 78-residue polypeptide: Probable Vpr-like protein (78 aa).

The short motif at 35–43 is the Nuclear export signal element; that stretch reads AIRLLQGLF. The Nuclear localization signal signature appears at 45–54; the sequence is RYRFKKPRVD.

The protein resides in the virion. The protein localises to the host nucleus. Its function is as follows. Seems to function as a Vpr-like protein, since it mediates host cell cycle arrest in G2 phase. Cell cycle arrest creates a favorable environment for maximizing viral expression and production. The protein is Probable Vpr-like protein of Feline immunodeficiency virus (isolate Petaluma) (FIV).